The following is an 88-amino-acid chain: Small ribosomal subunit protein uS15c (88 aa).

This sequence belongs to the universal ribosomal protein uS15 family. Part of the 30S ribosomal subunit.

The protein localises to the plastid. It is found in the chloroplast. This is Small ribosomal subunit protein uS15c (rps15) from Pinus koraiensis (Korean pine).